The chain runs to 341 residues: Phosphate acyltransferase (341 aa).

The protein belongs to the PlsX family. As to quaternary structure, homodimer. Probably interacts with PlsY.

Its subcellular location is the cytoplasm. It catalyses the reaction a fatty acyl-[ACP] + phosphate = an acyl phosphate + holo-[ACP]. It participates in lipid metabolism; phospholipid metabolism. Catalyzes the reversible formation of acyl-phosphate (acyl-PO(4)) from acyl-[acyl-carrier-protein] (acyl-ACP). This enzyme utilizes acyl-ACP as fatty acyl donor, but not acyl-CoA. In Photobacterium profundum (strain SS9), this protein is Phosphate acyltransferase.